We begin with the raw amino-acid sequence, 55 residues long: Ribosome biogenesis protein Nop10 (55 aa).

It belongs to the NOP10 family.

Involved in ribosome biogenesis; more specifically in 18S rRNA pseudouridylation and in cleavage of pre-rRNA. The chain is Ribosome biogenesis protein Nop10 from Methanosphaera stadtmanae (strain ATCC 43021 / DSM 3091 / JCM 11832 / MCB-3).